The chain runs to 537 residues: 2-isopropylmalate synthase (537 aa).

One can recognise a Pyruvate carboxyltransferase domain in the interval 8–269 (VLIFDTTLRD…YFNGYLGRAE (262 aa)). The Mn(2+) site is built by aspartate 17, histidine 208, histidine 210, and asparagine 244. Residues 408-537 (QLAGVQVSCG…QRAPLPAPAL (130 aa)) form a regulatory domain region.

Belongs to the alpha-IPM synthase/homocitrate synthase family. LeuA type 1 subfamily. Homodimer. Mn(2+) serves as cofactor.

It localises to the cytoplasm. It carries out the reaction 3-methyl-2-oxobutanoate + acetyl-CoA + H2O = (2S)-2-isopropylmalate + CoA + H(+). Its pathway is amino-acid biosynthesis; L-leucine biosynthesis; L-leucine from 3-methyl-2-oxobutanoate: step 1/4. Catalyzes the condensation of the acetyl group of acetyl-CoA with 3-methyl-2-oxobutanoate (2-ketoisovalerate) to form 3-carboxy-3-hydroxy-4-methylpentanoate (2-isopropylmalate). The protein is 2-isopropylmalate synthase of Synechococcus sp. (strain RCC307).